The sequence spans 442 residues: Transcription factor AP-2-epsilon (442 aa).

Positions 54–59 match the PPxY motif motif; sequence YFPPPY. Position 246 is a phosphoserine; by PKA (Ser-246). The segment at 287 to 417 is H-S-H (helix-span-helix), dimerization; sequence RRKAANVTLL…YLLESLKGLD (131 aa).

This sequence belongs to the AP-2 family. In terms of assembly, binds DNA as a dimer. Can form homodimers or heterodimers with other AP-2 family members. As to expression, expressed in skin, primary keratinocytes, immortalized keratinocytes, and HeLa cell line.

It localises to the nucleus. Functionally, sequence-specific DNA-binding protein that interacts with inducible viral and cellular enhancer elements to regulate transcription of selected genes. AP-2 factors bind to the consensus sequence 5'-GCCNNNGGC-3' and activate genes involved in a large spectrum of important biological functions including proper eye, face, body wall, limb and neural tube development. They also suppress a number of genes including MCAM/MUC18, C/EBP alpha and MYC. AP-2-epsilon may play a role in the development of the CNS and in cartilage differentiation. In Homo sapiens (Human), this protein is Transcription factor AP-2-epsilon.